Here is a 353-residue protein sequence, read N- to C-terminus: Photosystem II protein D1 (353 aa).

The residue at position 2 (T2) is an N-acetylthreonine. Position 2 is a phosphothreonine (T2). 3 helical membrane-spanning segments follow: residues 29 to 46 (YIGWFGVLMIPTLLTATS), 118 to 133 (HFLLGVACYMGREWEL), and 142 to 156 (WIAIAYSAPVAAATA). H118 contributes to the chlorophyll a binding site. Residue Y126 participates in pheophytin a binding. 2 residues coordinate [CaMn4O5] cluster: D170 and E189. The helical transmembrane segment at 197–218 (FHMLGVAGVFGGSLFSAMHGSL) threads the bilayer. Residue H198 participates in chlorophyll a binding. A quinone contacts are provided by residues H215 and 264–265 (SF). H215 is a binding site for Fe cation. H272 contacts Fe cation. Residues 274-288 (FLAAWPVIGIWFTAL) form a helical membrane-spanning segment. H332, E333, D342, and A344 together coordinate [CaMn4O5] cluster. A propeptide spanning residues 345–353 (TFEVSATNA) is cleaved from the precursor.

It belongs to the reaction center PufL/M/PsbA/D family. In terms of assembly, PSII is composed of 1 copy each of membrane proteins PsbA, PsbB, PsbC, PsbD, PsbE, PsbF, PsbH, PsbI, PsbJ, PsbK, PsbL, PsbM, PsbT, PsbX, PsbY, PsbZ, Psb30/Ycf12, at least 3 peripheral proteins of the oxygen-evolving complex and a large number of cofactors. It forms dimeric complexes. It depends on The D1/D2 heterodimer binds P680, chlorophylls that are the primary electron donor of PSII, and subsequent electron acceptors. It shares a non-heme iron and each subunit binds pheophytin, quinone, additional chlorophylls, carotenoids and lipids. D1 provides most of the ligands for the Mn4-Ca-O5 cluster of the oxygen-evolving complex (OEC). There is also a Cl(-1) ion associated with D1 and D2, which is required for oxygen evolution. The PSII complex binds additional chlorophylls, carotenoids and specific lipids. as a cofactor. Tyr-161 forms a radical intermediate that is referred to as redox-active TyrZ, YZ or Y-Z. Post-translationally, C-terminally processed by CTPA; processing is essential to allow assembly of the oxygen-evolving complex and thus photosynthetic growth.

It localises to the plastid membrane. It catalyses the reaction 2 a plastoquinone + 4 hnu + 2 H2O = 2 a plastoquinol + O2. Its function is as follows. Photosystem II (PSII) is a light-driven water:plastoquinone oxidoreductase that uses light energy to abstract electrons from H(2)O, generating O(2) and a proton gradient subsequently used for ATP formation. It consists of a core antenna complex that captures photons, and an electron transfer chain that converts photonic excitation into a charge separation. The D1/D2 (PsbA/PsbD) reaction center heterodimer binds P680, the primary electron donor of PSII as well as several subsequent electron acceptors. The sequence is that of Photosystem II protein D1 from Cuscuta gronovii (Common dodder).